Reading from the N-terminus, the 263-residue chain is MSDRGSRHSLSLWFQRLVAAFFLTGQVFLHILQGRINRRNTLEQMNMVGPESMAIALITAGFVGMVFTIQVAREFIYYGATTTIGGVLSLSLTRELAPVLTAVVIAGRVGSAFAAEIGTMRVTEQLDALYMLRTDPIDYLVVPRVIACGLMLPILTGLSLFVGMAGGLVISSSLYAINPTIFLNSVQNFTQLWDVFACLFKSLVFGVIIAIIGCSWGLTTTGGAKGVGESTTTAVVTSLLAIFISNFFLSWLMFQGTGDTALG.

The next 7 membrane-spanning stretches (helical) occupy residues Leu12–Leu32, Ser52–Ala72, Ala97–Ile117, Leu140–Val162, Gly167–Val186, Leu192–Ile212, and Ala234–Phe254.

This sequence belongs to the MlaE permease family.

It localises to the cell membrane. Its function is as follows. Could be part of an ABC transporter complex. This is Probable ABC transporter permease protein slr1045 from Synechocystis sp. (strain ATCC 27184 / PCC 6803 / Kazusa).